Here is an 83-residue protein sequence, read N- to C-terminus: MAHKKGAGSTKNGRDSNAKRLGVKRFGGQRVKAGNILVRQRGMKFTPGLNVGCGKDFTLYALTDGIVNFDYKNAQQKRINIIG.

The interval 1–24 (MAHKKGAGSTKNGRDSNAKRLGVK) is disordered.

It belongs to the bacterial ribosomal protein bL27 family.

The protein resides in the plastid. It is found in the chloroplast. The polypeptide is Large ribosomal subunit protein bL27c (rpl27) (Trieres chinensis (Marine centric diatom)).